The sequence spans 142 residues: Hemoglobin subunit zeta (142 aa).

Ser-2 is modified (N-acetylserine). Positions 2 to 142 constitute a Globin domain; sequence SLTKAERTMV…VSSVLTEKYR (141 aa). Ser-53 bears the Phosphoserine mark. His-59 contributes to the heme b binding site. Phosphoserine is present on Ser-73. His-88 is a binding site for heme b.

Belongs to the globin family. Heterotetramer of two zeta chains and beta-type chains.

Functionally, the zeta chain is an alpha-type chain of mammalian embryonic hemoglobin. This Equus caballus (Horse) protein is Hemoglobin subunit zeta (HBZ1).